The chain runs to 179 residues: uncharacterized protein (179 aa).

The segment covering 26-39 has biased composition (low complexity); sequence AAKLAAATTPTHTA. Positions 26-179 are disordered; the sequence is AAKLAAATTP…RPRRNTLRHM (154 aa). Positions 150 to 165 are enriched in polar residues; that stretch reads RQSVTQSTAARQTQPH. The segment covering 167-179 has biased composition (basic residues); the sequence is GRPRPRRNTLRHM.

This is an uncharacterized protein from Equus caballus (Horse).